The sequence spans 180 residues: Ribulose bisphosphate carboxylase small subunit, chloroplastic 1 (180 aa).

Residues 1-56 (MASSVISSAAVATRTNVAQASMVAPFNGLKSAVSFPVSSKQNLDITSIASNGGRVQ) constitute a chloroplast transit peptide.

Belongs to the RuBisCO small chain family. As to quaternary structure, heterohexadecamer of 8 large and 8 small subunits.

The protein localises to the plastid. The protein resides in the chloroplast. In terms of biological role, ruBisCO catalyzes two reactions: the carboxylation of D-ribulose 1,5-bisphosphate, the primary event in carbon dioxide fixation, as well as the oxidative fragmentation of the pentose substrate. Both reactions occur simultaneously and in competition at the same active site. Although the small subunit is not catalytic it is essential for maximal activity. The chain is Ribulose bisphosphate carboxylase small subunit, chloroplastic 1 from Petunia hybrida (Petunia).